We begin with the raw amino-acid sequence, 265 residues long: 4-hydroxy-tetrahydrodipicolinate reductase (265 aa).

NAD(+) contacts are provided by residues Gly-7–Met-12 and Asp-33. Position 34 (Arg-34) interacts with NADP(+). Residues Gly-96–Thr-98 and Ser-120–Met-123 each bind NAD(+). Catalysis depends on His-153, which acts as the Proton donor/acceptor. His-154 contacts (S)-2,3,4,5-tetrahydrodipicolinate. The active-site Proton donor is Lys-157. Gly-163–Thr-164 serves as a coordination point for (S)-2,3,4,5-tetrahydrodipicolinate.

It belongs to the DapB family.

It localises to the cytoplasm. The enzyme catalyses (S)-2,3,4,5-tetrahydrodipicolinate + NAD(+) + H2O = (2S,4S)-4-hydroxy-2,3,4,5-tetrahydrodipicolinate + NADH + H(+). The catalysed reaction is (S)-2,3,4,5-tetrahydrodipicolinate + NADP(+) + H2O = (2S,4S)-4-hydroxy-2,3,4,5-tetrahydrodipicolinate + NADPH + H(+). It functions in the pathway amino-acid biosynthesis; L-lysine biosynthesis via DAP pathway; (S)-tetrahydrodipicolinate from L-aspartate: step 4/4. Catalyzes the conversion of 4-hydroxy-tetrahydrodipicolinate (HTPA) to tetrahydrodipicolinate. The sequence is that of 4-hydroxy-tetrahydrodipicolinate reductase from Burkholderia pseudomallei (strain 1106a).